Consider the following 170-residue polypeptide: NADH-quinone oxidoreductase subunit B (170 aa).

Residues Cys-37, Cys-38, Cys-102, and Cys-131 each contribute to the [4Fe-4S] cluster site.

Belongs to the complex I 20 kDa subunit family. In terms of assembly, NDH-1 is composed of 14 different subunits. Subunits NuoB, C, D, E, F, and G constitute the peripheral sector of the complex. Requires [4Fe-4S] cluster as cofactor.

The protein resides in the cell inner membrane. The enzyme catalyses a quinone + NADH + 5 H(+)(in) = a quinol + NAD(+) + 4 H(+)(out). NDH-1 shuttles electrons from NADH, via FMN and iron-sulfur (Fe-S) centers, to quinones in the respiratory chain. The immediate electron acceptor for the enzyme in this species is believed to be ubiquinone. Couples the redox reaction to proton translocation (for every two electrons transferred, four hydrogen ions are translocated across the cytoplasmic membrane), and thus conserves the redox energy in a proton gradient. The sequence is that of NADH-quinone oxidoreductase subunit B from Geotalea daltonii (strain DSM 22248 / JCM 15807 / FRC-32) (Geobacter daltonii).